Consider the following 631-residue polypeptide: Nucleoside triphosphatase I (631 aa).

The 163-residue stretch at 42–204 (FLGLDSMHSL…TMLVNLLRPG (163 aa)) folds into the Helicase ATP-binding domain. Residue 55–62 (HETGVGKT) coordinates ATP. A DEXH box motif is present at residues 141–144 (DECH). The Helicase C-terminal domain occupies 367-532 (KFIDVCLGIL…EFVQLFRVFK (166 aa)). The binding to the cap-specific mRNA (nucleoside-2'-O-)-methyltransferase stretch occupies residues 457–524 (DIFILDMTWN…EIIQSKSKEF (68 aa)).

Belongs to the helicase family. NPH I subfamily. As to quaternary structure, monomer. Interacts (via C-terminus) with RAP94/OPG109 (via N-terminus). Interacts with the cap-specific mRNA (nucleoside-2'-O-)-methyltransferase OPG102.

The protein localises to the virion. The enzyme catalyses a ribonucleoside 5'-triphosphate + H2O = a ribonucleoside 5'-diphosphate + phosphate + H(+). Functionally, DNA-dependent ATPase that acts as a 5' to 3' translocase on single-stranded DNA and thereby plays a role in transcription termination of viral early genes. Uses forward translocation in concert with the viral RNA polymerase RAP94/OPG109 subunit and the capping enzyme/VTF to catalyze release of UUUUUNU-containing nascent RNA from the elongation complex. In addition, acts as a positive elongation factor to assist transcription through problematic sequences. The polypeptide is Nucleoside triphosphatase I (OPG123) (Bos taurus (Bovine)).